A 638-amino-acid polypeptide reads, in one-letter code: Guanylate-binding protein 7 (638 aa).

The tract at residues 1–310 is GTPase domain (Globular); the sequence is MASEIHMPGP…DAINSGATPC (310 aa). In terms of domain architecture, GB1/RHD3-type G spans 35 to 277; it reads TQPVVVVAIV…FCSYIFTHAK (243 aa). Residues 45–52, 67–69, and 97–101 each bind GTP; these read GLYRTGKS, LGC, and DTEGL. The tract at residues 311–638 is interaction with the CYBA-CYBB complex; it reads LENAMAVLAQ…LRNPGKKIIS (328 aa). The interval 590–638 is C-terminal tail; required for its localization to cytoplasmic vesicle; sequence PSVFSQILDVAGSIFIAALPGAAKLVDLGMKILSSLCNRLRNPGKKIIS.

It belongs to the TRAFAC class dynamin-like GTPase superfamily. GB1/RHD3 GTPase family. GB1 subfamily. In terms of assembly, monomer and dimer. Interacts with CYBA, CYBA-CYBB complex and ATG4B. Interacts (via GB1/RHD3-type G domain) with NCF2 and NCF2-NCF4 complex.

It is found in the cytoplasmic vesicle membrane. It catalyses the reaction GTP + H2O = GDP + phosphate + H(+). It carries out the reaction GDP + H2O = GMP + phosphate + H(+). Functionally, interferon (IFN)-inducible GTPase that plays important roles in innate immunity against a diverse range of bacterial, viral and protozoan pathogens. Hydrolyzes GTP to GMP in two consecutive cleavage reactions and predominantly uses GTP and not GDP or GMP as the substrate. Following infection, recruited to the pathogen-containing vacuoles or vacuole-escaped bacteria and acts as a positive regulator of inflammasome assembly by promoting the release of inflammasome ligands from bacteria. Acts by promoting lysis of pathogen-containing vacuoles, releasing pathogens into the cytosol. Following pathogen release in the cytosol, promotes recruitment of proteins that mediate bacterial cytolysis: this liberates ligands that are detected by inflammasomes, such as lipopolysaccharide (LPS) that activates the non-canonical CASP4/CASP11 inflammasome or double-stranded DNA (dsDNA) that activates the AIM2 inflammasome. Also promotes IFN-gamma-mediated host defense against bacterial infections by regulating oxidative responses and bacteriolytic peptide generation. May help to assemble NADPH oxidase on phagosomal membranes by acting as a bridging protein between NADPH oxidase cytosolic subunits NCF2-NCF4 and the membrane subunits CYBA-CYBB. Participates along with GBP1 in trafficking monoubiquinated protein cargo to autolysosomes for generating ubiquitin-derived antimicrobial peptides. Facilitates influenza A virus replication by inhibiting the activation of NF-kappaB and JAK-STAT signaling pathways and the expression of type I, type III interferons and pro-inflammatory cytokines. Confers protection to several pathogens, including the bacterial pathogens Listeria monocytogenes and Mycobacterium bovis BCG as well as the protozoan pathogen Toxoplasma gondii. Required for disruption of the parasitophorous vacuole formed following T.gondii infection and subsequent killing of the parasite. In Homo sapiens (Human), this protein is Guanylate-binding protein 7 (GBP7).